A 506-amino-acid chain; its full sequence is NAD(P)H-quinone oxidoreductase subunit 2 (506 aa).

The next 13 helical transmembrane spans lie at 14–34 (AIIP…VDLA), 42–62 (WAPS…TLQW), 79–99 (LAIA…LISW), 108–128 (PIGE…LLCG), 132–152 (LISV…LSGY), 167–187 (LLVG…LYGL), 206–226 (FITS…IAAV), 240–260 (PTPV…AFAI), 276–296 (LLFT…ALAQ), 302–322 (MLAY…VSGT), 330–350 (VLYL…VILF), 374–394 (LGLS…GFFG), and 409–429 (LLVI…ISVI).

This sequence belongs to the complex I subunit 2 family. As to quaternary structure, NDH-1 can be composed of about 15 different subunits; different subcomplexes with different compositions have been identified which probably have different functions.

It localises to the cellular thylakoid membrane. The enzyme catalyses a plastoquinone + NADH + (n+1) H(+)(in) = a plastoquinol + NAD(+) + n H(+)(out). The catalysed reaction is a plastoquinone + NADPH + (n+1) H(+)(in) = a plastoquinol + NADP(+) + n H(+)(out). NDH-1 shuttles electrons from an unknown electron donor, via FMN and iron-sulfur (Fe-S) centers, to quinones in the respiratory and/or the photosynthetic chain. The immediate electron acceptor for the enzyme in this species is believed to be plastoquinone. Couples the redox reaction to proton translocation, and thus conserves the redox energy in a proton gradient. Cyanobacterial NDH-1 also plays a role in inorganic carbon-concentration. The chain is NAD(P)H-quinone oxidoreductase subunit 2 from Prochlorococcus marinus (strain MIT 9301).